A 512-amino-acid polypeptide reads, in one-letter code: NAD(P)H-quinone oxidoreductase subunit 2, organellar chromatophore (512 aa).

14 helical membrane-spanning segments follow: residues 6–26, 43–63, 80–100, 107–127, 133–153, 168–188, 210–230, 242–262, 276–296, 304–324, 332–352, 376–396, 411–431, and 464–484; these read LLALPLNAATIVPEGAILLAL, WVPPICYAGLGSALILLASQW, LAIAFRAIIATSTLFSLMISW, GAPMGEYAAILLAATLGAMFL, LVSIFVSLETLSVSSYLLAGY, LLVGSATAAVFLYGASLLYGL, AALALVFVLATVAFKIAAVPF, PTPIVAFLSVGSKTAGFALAL, WKFLFSLLAILSMVLGNIVAL, MLAYSSIGQAGFVMIGLVCGT, ILYLATYLFMNMGAFACVILF, IGLSLCLLSLGGIPPMLGFFG, LLVVTGLITSVVSIYYYISVI, and VALLVCVIVTGIGGIFSNPLF.

It belongs to the complex I subunit 2 family. NDH-1 can be composed of about 15 different subunits; different subcomplexes with different compositions have been identified which probably have different functions.

The protein resides in the plastid. It is found in the organellar chromatophore thylakoid membrane. The catalysed reaction is a plastoquinone + NADH + (n+1) H(+)(in) = a plastoquinol + NAD(+) + n H(+)(out). It carries out the reaction a plastoquinone + NADPH + (n+1) H(+)(in) = a plastoquinol + NADP(+) + n H(+)(out). Functionally, NDH-1 shuttles electrons from an unknown electron donor, via FMN and iron-sulfur (Fe-S) centers, to quinones in the respiratory and/or the photosynthetic chain. The immediate electron acceptor for the enzyme in this species is believed to be plastoquinone. Couples the redox reaction to proton translocation, and thus conserves the redox energy in a proton gradient. Cyanobacterial NDH-1 also plays a role in inorganic carbon-concentration. This Paulinella chromatophora protein is NAD(P)H-quinone oxidoreductase subunit 2, organellar chromatophore.